We begin with the raw amino-acid sequence, 502 residues long: MSVRSTKVTYRTSSAAPRSGGFSSFSYSGAPMASRASSASFSLGSSYGGASRFGSGYRSGFGGAGVGSAGITSVSVNQSLLAPLNLEIDPSIQQVRTEEKEQIKTLNNKFASFIDKVRFLEQQNKMLETKWNLLQNQKTTRSNMDGMFEAYISNLRRQLDGLGQDKMRLESELGNMQGLVEDFKNKYEDEINRRTELENEFVLLKKDVDEAYMNKVQLEARLEALTDEINFLRQLYEEELREMQSQISDTSVVLSMDNNRSLDLDGIIAEVRAQYEDVANKSRLEVENMYQVKYQELQTSAGRYGDDLKNTKTEISELTRYTTRLQSEIDALKAQRANLEAQIAEAEERGELALKDARNKLAELEAALQKAKQDMSRQLRDYQELMNVKLALDIEIATYRKLLEGEESRLESGFQNLSIQTKTVSGVSSGFGGGISSGFSNGVSSGFGGGYGGGYGGGYSYSSNVSSYIGDTKTSKRRLLVKTVETKDGRVLSESSDVFSKP.

The segment at 1–98 is head; it reads MSVRSTKVTY…DPSIQQVRTE (98 aa). 4 positions are modified to phosphoserine: Ser-13, Ser-26, Ser-37, and Ser-40. The segment at 99-134 is coil 1A; sequence EKEQIKTLNNKFASFIDKVRFLEQQNKMLETKWNLL. Residues 99-410 form the IF rod domain; it reads EKEQIKTLNN…KLLEGEESRL (312 aa). The linker 1 stretch occupies residues 135 to 151; sequence QNQKTTRSNMDGMFEAY. The interval 152–243 is coil 1B; that stretch reads ISNLRRQLDG…QLYEEELREM (92 aa). The tract at residues 244-267 is linker 12; that stretch reads QSQISDTSVVLSMDNNRSLDLDGI. The tract at residues 268–406 is coil 2; that stretch reads IAEVRAQYED…ATYRKLLEGE (139 aa). The interval 269-390 is necessary for interaction with PNN; the sequence is AEVRAQYEDV…DYQELMNVKL (122 aa). The interval 407-502 is tail; that stretch reads ESRLESGFQN…SESSDVFSKP (96 aa). Phosphoserine is present on residues Ser-425, Ser-428, Ser-436, and Ser-444.

This sequence belongs to the intermediate filament family. As to quaternary structure, heterotetramer of two type I and two type II keratins. Keratin-8 associates with keratin-18. As to expression, expressed in oocytes, eggs, embryos, liver and intestinal mucosa.

The protein resides in the cytoplasm. The protein localises to the nucleus. It is found in the nucleoplasm. It localises to the nucleus matrix. Functionally, together with KRT19, helps to link the contractile apparatus to dystrophin at the costameres of striated muscle. The sequence is that of Keratin, type II cytoskeletal 8 from Xenopus laevis (African clawed frog).